The primary structure comprises 105 residues: uncharacterized protein (105 aa).

It belongs to the EspC family.

Functionally, may be involved in assembly of the ESX-1 / type VII specialized secretion system (T7SS), which exports several proteins including EsxA and EsxB. Involved in DNA conjugation, in at least recipient strain. This is an uncharacterized protein from Mycolicibacterium smegmatis (strain MKD8) (Mycobacterium smegmatis).